Reading from the N-terminus, the 602-residue chain is Pentatricopeptide repeat-containing protein At3g04760, chloroplastic (602 aa).

The transit peptide at 1 to 78 directs the protein to the chloroplast; the sequence is MTPLSSELVG…TDATLPTERR (78 aa). Positions 42–64 are enriched in polar residues; sequence FSNSNPNNDNGRSFSSSGARNLQ. The disordered stretch occupies residues 42 to 85; sequence FSNSNPNNDNGRSFSSSGARNLQTTTTTDATLPTERRQQHSQSL. The span at 65–74 shows a compositional bias: low complexity; that stretch reads TTTTTDATLP. 14 PPR repeats span residues 88 to 122, 123 to 153, 157 to 191, 192 to 226, 227 to 261, 262 to 296, 297 to 331, 332 to 366, 367 to 401, 402 to 436, 437 to 471, 472 to 506, 507 to 541, and 542 to 576; these read RDTQ…GYNP, DVIL…LEKF, DVFA…DFSP, DTVT…NCQP, TVIT…GLKP, DMFT…GCEP, DVIS…KCDP, NVVT…GLTP, DAYS…GCLP, DIVN…GCSP, NSSS…GIDP, DEIT…EFHP, SVVT…GCRP, and NETT…DAIS.

Belongs to the PPR family. P subfamily.

The protein resides in the plastid. It localises to the chloroplast. The polypeptide is Pentatricopeptide repeat-containing protein At3g04760, chloroplastic (Arabidopsis thaliana (Mouse-ear cress)).